The following is a 342-amino-acid chain: tRNA N6-adenosine threonylcarbamoyltransferase (342 aa).

Positions 111 and 115 each coordinate Fe cation. Substrate-binding positions include 133–137, aspartate 166, glycine 179, aspartate 183, and asparagine 273; that span reads VVSGG. A Fe cation-binding site is contributed by aspartate 301.

The protein belongs to the KAE1 / TsaD family. Fe(2+) is required as a cofactor.

Its subcellular location is the cytoplasm. It catalyses the reaction L-threonylcarbamoyladenylate + adenosine(37) in tRNA = N(6)-L-threonylcarbamoyladenosine(37) in tRNA + AMP + H(+). In terms of biological role, required for the formation of a threonylcarbamoyl group on adenosine at position 37 (t(6)A37) in tRNAs that read codons beginning with adenine. Is involved in the transfer of the threonylcarbamoyl moiety of threonylcarbamoyl-AMP (TC-AMP) to the N6 group of A37, together with TsaE and TsaB. TsaD likely plays a direct catalytic role in this reaction. This Trichlorobacter lovleyi (strain ATCC BAA-1151 / DSM 17278 / SZ) (Geobacter lovleyi) protein is tRNA N6-adenosine threonylcarbamoyltransferase.